Reading from the N-terminus, the 146-residue chain is Mite group 2 allergen Der f 2 (146 aa).

A signal peptide spans 1–17 (MISKILCLSLLVAAVVA). 3 disulfides stabilise this stretch: Cys-25–Cys-136, Cys-38–Cys-44, and Cys-90–Cys-95.

Belongs to the NPC2 family.

Its subcellular location is the secreted. In Dermatophagoides farinae (American house dust mite), this protein is Mite group 2 allergen Der f 2 (DERF2).